Consider the following 346-residue polypeptide: Phosphoribosylformylglycinamidine cyclo-ligase (346 aa).

This sequence belongs to the AIR synthase family.

It is found in the cytoplasm. The enzyme catalyses 2-formamido-N(1)-(5-O-phospho-beta-D-ribosyl)acetamidine + ATP = 5-amino-1-(5-phospho-beta-D-ribosyl)imidazole + ADP + phosphate + H(+). It functions in the pathway purine metabolism; IMP biosynthesis via de novo pathway; 5-amino-1-(5-phospho-D-ribosyl)imidazole from N(2)-formyl-N(1)-(5-phospho-D-ribosyl)glycinamide: step 2/2. The protein is Phosphoribosylformylglycinamidine cyclo-ligase of Geobacillus thermodenitrificans (strain NG80-2).